Consider the following 310-residue polypeptide: Ribosomal protein uL3 glutamine methyltransferase (310 aa).

This sequence belongs to the protein N5-glutamine methyltransferase family. PrmB subfamily.

The enzyme catalyses L-glutaminyl-[ribosomal protein uL3] + S-adenosyl-L-methionine = N(5)-methyl-L-glutaminyl-[ribosomal protein uL3] + S-adenosyl-L-homocysteine + H(+). Functionally, methylates large ribosomal subunit protein uL3 on a specific glutamine residue. This Vibrio anguillarum (strain ATCC 68554 / 775) (Listonella anguillarum) protein is Ribosomal protein uL3 glutamine methyltransferase.